We begin with the raw amino-acid sequence, 90 residues long: DNA-directed RNA polymerase subunit omega (90 aa).

Belongs to the RNA polymerase subunit omega family. In terms of assembly, the RNAP catalytic core consists of 2 alpha, 1 beta, 1 beta' and 1 omega subunit. When a sigma factor is associated with the core the holoenzyme is formed, which can initiate transcription.

It catalyses the reaction RNA(n) + a ribonucleoside 5'-triphosphate = RNA(n+1) + diphosphate. Its function is as follows. Promotes RNA polymerase assembly. Latches the N- and C-terminal regions of the beta' subunit thereby facilitating its interaction with the beta and alpha subunits. Required for kasugamycin production and aerial mycelium formation in S.kasugaensis and responsible for pleiotropy. The chain is DNA-directed RNA polymerase subunit omega (rpoZ) from Streptomyces kasugaensis.